A 186-amino-acid chain; its full sequence is MGRYAKEPDNPAKSCKARGSNLRVHFKNTRETALAIKRMPLRRAQKFLKNVCEKKECVPFRRFNGGVGRCAQAKHWNTSVGRWPKKSAEFLLQLLKNAEANADYRGLDVDRLVVDHIQVNRAPCLRRRTYRAHGRINPYMSSPCHIELSLTEKEDVVTKAAENEPAKKKLSKKKLQRQKEKMMRNE.

Positions 160 to 186 (AAENEPAKKKLSKKKLQRQKEKMMRNE) are disordered. The segment covering 177–186 (RQKEKMMRNE) has biased composition (basic and acidic residues).

Belongs to the universal ribosomal protein uL22 family.

This is Large ribosomal subunit protein uL22 (RpL17) from Aedes aegypti (Yellowfever mosquito).